Here is a 216-residue protein sequence, read N- to C-terminus: Cytidylate kinase (216 aa).

10–18 (GPAAAGKST) lines the ATP pocket.

Belongs to the cytidylate kinase family. Type 1 subfamily.

It localises to the cytoplasm. It carries out the reaction CMP + ATP = CDP + ADP. It catalyses the reaction dCMP + ATP = dCDP + ADP. The sequence is that of Cytidylate kinase from Macrococcus caseolyticus (strain JCSC5402) (Macrococcoides caseolyticum).